A 534-amino-acid chain; its full sequence is MGLSRAPWMGRVGGRGMMALLLAGLLLPGTLAKSIGTFSDPCKDPTRITSPNDPCLTGKGGSSGFSSYSGSSGSGSSISSASGSGGGSSGSSVAQGGSAGSFKPGTGYSQVSYSSGSGSSLQGASSSSQLGGSGSQPGSSGSQPGSSGSHSGSSGSNTGSSSSHSSSSSTFQFSSSSSQVGSGSALPTSDNAYRGILNPSQLGQSSSFSQTSGQRVSSNQRPCSSDIPDSPCSGGPIISHSGPYIPSSHSVSGGQRPVVVVVEQHGSGGPGVVQGLPCSNGGLPGKPCPPITSVDKSYGGYEVVGGSSDSYLVPGMTYSKGKIYPVGYFTKDNPVKGSPGVPSFAAGPPISEGKYFSSNPIIPSQSGASSVIAFQPVGTGGVQLCGGGSTGSKGPCSPFSSRVHSSSSISSSSGSPYHPCGSTSQSPCSPPGTGSFSSSSSSQSSGKIILQPCGSKSSSSGHPCMSVSSLTLTGDPDGSPHPDPSAGAKPCGSGSAGKIPCRSIRDILAQVKPLGPQLADPEVFLPQGELLDSP.

The signal sequence occupies residues 1-32; sequence MGLSRAPWMGRVGGRGMMALLLAGLLLPGTLA. Disordered regions lie at residues 38–252 and 396–497; these read FSDP…HSVS and CSPF…GSAG. 5 stretches are compositionally biased toward low complexity: residues 64-82, 107-185, 200-236, 397-415, and 431-446; these read GFSS…SSAS, GYSQ…SGSA, SQLG…SGGP, SPFS…SSGS, and PGTG…QSSG. The span at 454–472 shows a compositional bias: polar residues; it reads GSKSSSSGHPCMSVSSLTL.

The protein localises to the secreted. In terms of biological role, important for the epidermal barrier integrity. The sequence is that of Corneodesmosin (CDSN) from Macaca mulatta (Rhesus macaque).